The primary structure comprises 219 residues: Probable lipoprotein YiaD (219 aa).

Positions 1–20 (MKKRVYLIAAVVSGALAVSG) are cleaved as a signal peptide. Residue C21 is the site of N-palmitoyl cysteine attachment. A lipid anchor (S-diacylglycerol cysteine) is attached at C21. 2 helical membrane-spanning segments follow: residues 37-55 (IGAG…LSSS) and 62-84 (GALI…MDVQ). The OmpA-like domain occupies 103-219 (GDNIILNMPN…RRVEITLSPL (117 aa)).

The protein localises to the cell inner membrane. It localises to the cell outer membrane. In terms of biological role, suppresses temperature-sensitive mutations in BamB when overexpressed. The sequence is that of Probable lipoprotein YiaD (yiaD) from Escherichia coli (strain K12).